A 306-amino-acid chain; its full sequence is D-alanine--D-alanine ligase (306 aa).

The ATP-grasp domain maps to 101–301 (KKILAHAGLP…FPDLVEHLVR (201 aa)). 129–185 (VAELGLPVVVKAPTQGSSIGVYIVEREEDLEARITDAVAYGGTRVLVEKFIAGPELT) serves as a coordination point for ATP. The Mg(2+) site is built by Asp256, Glu268, and Asn270.

The protein belongs to the D-alanine--D-alanine ligase family. Mg(2+) serves as cofactor. Mn(2+) is required as a cofactor.

It is found in the cytoplasm. The enzyme catalyses 2 D-alanine + ATP = D-alanyl-D-alanine + ADP + phosphate + H(+). The protein operates within cell wall biogenesis; peptidoglycan biosynthesis. Its function is as follows. Cell wall formation. This is D-alanine--D-alanine ligase from Desulforudis audaxviator (strain MP104C).